Here is a 294-residue protein sequence, read N- to C-terminus: Ribosomal RNA small subunit methyltransferase A (294 aa).

6 residues coordinate S-adenosyl-L-methionine: Asn-31, Leu-33, Gly-58, Glu-79, Asp-104, and Asn-129.

The protein belongs to the class I-like SAM-binding methyltransferase superfamily. rRNA adenine N(6)-methyltransferase family. RsmA subfamily.

The protein resides in the cytoplasm. The enzyme catalyses adenosine(1518)/adenosine(1519) in 16S rRNA + 4 S-adenosyl-L-methionine = N(6)-dimethyladenosine(1518)/N(6)-dimethyladenosine(1519) in 16S rRNA + 4 S-adenosyl-L-homocysteine + 4 H(+). In terms of biological role, specifically dimethylates two adjacent adenosines (A1518 and A1519) in the loop of a conserved hairpin near the 3'-end of 16S rRNA in the 30S particle. May play a critical role in biogenesis of 30S subunits. The polypeptide is Ribosomal RNA small subunit methyltransferase A (Oceanobacillus iheyensis (strain DSM 14371 / CIP 107618 / JCM 11309 / KCTC 3954 / HTE831)).